Here is a 1680-residue protein sequence, read N- to C-terminus: SWI/SNF chromatin-remodeling complex subunit snf22 (1680 aa).

Disordered regions lie at residues 61 to 135, 203 to 258, 274 to 300, and 367 to 427; these read QQMR…SQAS, NNSF…HSFS, RRGS…ASPY, and YVYR…VPPT. Residues 62-91 show a composition bias toward polar residues; sequence QMRNQSSEFPDAENTNLRKQQDTLPTTGFN. 2 stretches are compositionally biased toward low complexity: residues 118-127 and 222-233; these read GNGNVGLNNP and SSLPHSFASPSS. Residues 234–245 show a composition bias toward polar residues; it reads TFEQPHTVQSRA. 3 stretches are compositionally biased toward low complexity: residues 247–258, 282–299, and 374–392; these read SVDTTSSSHSFS, PSTF…LASP, and PPSA…SVDP. Polar residues predominate over residues 406 to 419; that stretch reads PSPSASALKTQSHV. The QLQ domain maps to 429 to 465; sequence KLNHAQLAMLKSQIVAYNCLNSPNGQVPPAVQQAIFG. A compositionally biased stretch (polar residues) spans 477 to 489; sequence SMPFQQNVPQMSS. A disordered region spans residues 477 to 499; the sequence is SMPFQQNVPQMSSVKKDTPTRDA. Residues 490–499 show a composition bias toward basic and acidic residues; the sequence is VKKDTPTRDA. One can recognise an HSA domain in the interval 704–776; that stretch reads QKTEHAMRQK…ARQRLQALRA (73 aa). Positions 817–832 are enriched in polar residues; sequence SNIHSGNTSGKGSNSA. Positions 817 to 836 are disordered; that stretch reads SNIHSGNTSGKGSNSAELEA. The 166-residue stretch at 881–1046 folds into the Helicase ATP-binding domain; that stretch reads LSLYNNNLNG…WALLNFVLPK (166 aa). 894-901 is a binding site for ATP; the sequence is DEMGLGKT. The DEGH box signature appears at 996–999; that stretch reads DEGH. Positions 1191–1354 constitute a Helicase C-terminal domain; that stretch reads LLDRILPKLF…STPEEREAFL (164 aa). The interval 1466–1511 is disordered; that stretch reads TVDDPSSTLMPRKRGRPRKKTNSGSSLSTPLSQESSLARSGRKNTP. Residues 1476-1486 show a composition bias toward basic residues; it reads PRKRGRPRKKT. Low complexity predominate over residues 1488-1502; that stretch reads SGSSLSTPLSQESSL. The region spanning 1513–1623 is the Bromo domain; the sequence is YKQKALRRYC…KTLKEVIEDL (111 aa).

The protein belongs to the SNF2/RAD54 helicase family. In terms of assembly, component of the SWI/SNF global transcription activator complex composed of at least arp9, arp42, snf5, snf22, snf30, sbf59, sol1, ssr1, ssr2, ssr3, ssr4 and tfg3.

It localises to the nucleus. Its function is as follows. Helicase. Component of the SWI/SNF complex, an ATP-dependent chromatin remodeling complex, required for the positive and negative regulation of gene expression of a large number of genes. It changes chromatin structure by altering DNA-histone contacts within a nucleosome, leading eventually to a change in nucleosome position, thus facilitating or repressing binding of gene-specific transcription factors. The protein is SWI/SNF chromatin-remodeling complex subunit snf22 (snf22) of Schizosaccharomyces pombe (strain 972 / ATCC 24843) (Fission yeast).